Here is a 1605-residue protein sequence, read N- to C-terminus: MEEHHRRLHVKAERASVIGGDIVDGAFGSWALRAARSEHQLKQQSNEDLAQNARISALLGEMRPRMSAMPPNGHQQQYQPQLRRKANTTNIVDVSSQVPSARNAIYGSWQDRHRPTRLYGSQLVSSSSTLPKYDQLYCNTASPLTGNGSTNTIATTGIRREPPEYGNVGRSVSTWQVTNSEHRPSLQAGWLKSSRPLARGALSPAAYFRDLENRHGSGASSPIVGGLSVVAVPITQRHAPTAGLAPISDDISTSKVSLDTENQQLNNEDSDKISGSALSRNTPRQASFMAAMQRHPLKESSTSIESNGGGTNTEEDQTVSATSKEDPSEDTGHDDPEETQEISETPIRRSRNRNASLRNRQSSRSLGGLDFEKLRMGTARVGDSNEATAENGTSSSSSRKNSRDDGLTSSPTTVAGPVFTTSSTSSISTSGEASSTAVAAAAAGSVAATTSRQTSSNSSVDSNHNEAMKMIRRARPKSYVLATSASMNEDVLSSSIIANEQSSSISHDTTTSGRELPSSLMGSTISMEMRSGGASSATTTTTSNSGQQTSRSLNAPHPPATHRLQRFIALFNSSKTSDGSGEHKKSRMKRSRTSLPASRFALPGTILQRDGVARQTWVKHQEIALGKSGKRNNWEDRWAVLCRRSLYLCVESPAYTTEKTIELGSHTRVDVCNAIVDIAYDWLSSSFSKQRHVVRIVTQNRSEHLIELNTESEMLSWISVLQSSSEDGIATGSSVDENELSTTGRHNNNAVSNSSALLHNSQSIASLASSSCSTATTSEFLNSQHTLQQQQQQQTNQKHQQTVNELSAGIVSHLPTSKSFGGLSTTASSTTENAKNRLIMHRYIAKNSQLQSPTANKKMETDPSTVPSSSQTMATTSSSFHHHSSQAGPSRDIENGEAPTATATTPKSGRKWKKSKAAKQGSGGGSSGSSSGSQQQGAAGAPQPVLGVRIADCPTGSCEDHVPMIVQACVCVIETYGMDTVGIYRIPGNTAAVNALKESLSNRGFDSVDLSKVESLDPRWRDVNVVSSLLKMFLRKLPEPLLTDKLYPFFIDANRISTHHNRLHKLRNLLRKLPRPHYDTLRFLIVHLSEITKHSDVNKMECRNLALMFGPSIVRPSDDNMATMVTHMSDQCKIIETLIHYNLWMFDESSTTEDAVPEQHPADGQNPLEPGGYGVGVPTGVSAASFNDMHNLIRKANEDQAAAMMNEGKGQKIKNMLRRNSRRDKSKSKLKIESTAPAAVNPRGWTQPTPSNTSAASVESAFCGNYQERDIDAEIESRQTVSPQMTSGSADGASSTRLDQSPSLESSLGSLPDTSRTEPILGSSGYDDDEAKEAARRKRQEEMYSARRIFIAGAAGAAAAATTTADAEKAAIDALANHSQHLHLASSPAFEVLSEETREKIRRMQKKQSWHDTKELRSGELLKTYSPTKDLTDALSCTSDYSTTSSAPLSTNPPLAVACADQPNSSSDYASSDPSPCARNPSTSPASRPSNLAISPAQLHATSSSGQSHQPMSRSQKIRLRTKLGSRDPARRHTLSDVDTLKEGRLDKLARWFGIRKSSPDVSRDEVSDDEKNHQEAPPLPAAAPPVIVRTSPNELTPVSGDELL.

Residues 1 to 574 (MEEHHRRLHV…QRFIALFNSS (574 aa)) form a required for localization to adherens junctions region. Disordered stretches follow at residues 293–430 (QRHP…ISTS), 529–556 (MRSGGASSATTTTTSNSGQQTSRSLNAP), and 574–593 (SKTSDGSGEHKKSRMKRSRT). Over residues 323–334 (SKEDPSEDTGHD) the composition is skewed to basic and acidic residues. 3 stretches are compositionally biased toward low complexity: residues 353-365 (RNASLRNRQSSRS), 420-430 (TTSSTSSISTS), and 530-552 (RSGGASSATTTTTSNSGQQTSRS). The PH domain occupies 599 to 726 (RFALPGTILQ…WISVLQSSSE (128 aa)). Composition is skewed to polar residues over residues 728–745 (GIATGSSVDENELSTTGR) and 846–855 (KNSQLQSPTA). Disordered regions lie at residues 728-752 (GIATGSSVDENELSTTGRHNNNAVS) and 846-942 (KNSQ…AGAP). The span at 868–879 (SSSQTMATTSSS) shows a compositional bias: low complexity. Over residues 908-917 (SGRKWKKSKA) the composition is skewed to basic residues. Residues 928–941 (GSSSGSQQQGAAGA) are compositionally biased toward low complexity. A Rho-GAP domain is found at 948-1146 (VRIADCPTGS…TLIHYNLWMF (199 aa)). Disordered stretches follow at residues 1152-1176 (TEDAVPEQHPADGQNPLEPGGYGVG), 1207-1258 (EGKG…AASV), 1277-1339 (SRQT…RRKR), 1438-1533 (TSDY…ARRH), and 1554-1605 (GIRK…DELL). Positions 1211-1229 (QKIKNMLRRNSRRDKSKSK) are enriched in basic residues. Polar residues-rich tracts occupy residues 1244–1257 (GWTQPTPSNTSAAS) and 1278–1300 (RQTVSPQMTSGSADGASSTRLDQ). Over residues 1301–1312 (SPSLESSLGSLP) the composition is skewed to low complexity. Polar residues predominate over residues 1438–1453 (TSDYSTTSSAPLSTNP). Low complexity predominate over residues 1461-1476 (DQPNSSSDYASSDPSP). 2 stretches are compositionally biased toward polar residues: residues 1480–1493 (NPSTSPASRPSNLA) and 1500–1515 (HATSSSGQSHQPMSRS). Residues 1558–1575 (SSPDVSRDEVSDDEKNHQ) show a composition bias toward basic and acidic residues.

As to quaternary structure, associated with the catenin-cadherin complex consisting of hmr-1, hmp-1 and hmp-2; this is mediated by interaction with picc-1.

It localises to the cytoplasm. It is found in the cell junction. The protein localises to the adherens junction. In terms of biological role, GTPase-activating protein for members of the Rho subfamily including Rac1, RhoA and cdc42 and other Ras-related subfamilies including let-60. Mediates radial (inner-outer) polarity and gastrulation by excluding par-6 from contacted cell surfaces; acts by inactivating cdc42 at inner cell surfaces which limits active cdc42 to outer cell surfaces devoid of cell-cell contacts, where cdc42 can bind and recruit par-6. Required for blastomere polarization. The sequence is that of GTPase-activating protein pac-1 (pac-1) from Caenorhabditis elegans.